The following is a 548-amino-acid chain: Membrane protein insertase YidC (548 aa).

The chain crosses the membrane as a helical span at residues 6–26 (NLLVIALLFVSFMIWQAWEQD). Residues 28–55 (NPQPQAQQTTQTTTTAAGSAADQGVPAS) are disordered. Low complexity predominate over residues 30–50 (QPQAQQTTQTTTTAAGSAADQ). Helical transmembrane passes span 350 to 370 (FVGN…GIMY), 420 to 440 (LGGC…YYML), 458 to 478 (LSAQ…MFFI), and 499 to 519 (PVIF…YYIV).

The protein belongs to the OXA1/ALB3/YidC family. Type 1 subfamily. Interacts with the Sec translocase complex via SecD. Specifically interacts with transmembrane segments of nascent integral membrane proteins during membrane integration.

The protein resides in the cell inner membrane. Its function is as follows. Required for the insertion and/or proper folding and/or complex formation of integral membrane proteins into the membrane. Involved in integration of membrane proteins that insert both dependently and independently of the Sec translocase complex, as well as at least some lipoproteins. Aids folding of multispanning membrane proteins. This Escherichia coli (strain K12 / MC4100 / BW2952) protein is Membrane protein insertase YidC.